The sequence spans 283 residues: MASQLVLRKADFFATPTQPVVVADRYPQNVFAEHTHEFCELVLVWRGNGLHVLNDRPYRITCGDLFYIRAEDRHSYQSVNDLVLHNIIYCPERLQLNVNWRDLLENPRGVNGDPRWRLSSQGMVQARQVIDQLEHESPKQDALSHCLAESLFLQLAITLRRHRYQPSGGTGPGEGETLDLLMAALGNSLDVPFDLQHFCSHYQIAERPLRQLFRQQTGMTISQYLRQLRICQAQYLLRHSSLLISEIAARCGFEDSNYFSVVFTRETGVTPRVWRQQWGALAG.

One can recognise an HTH araC/xylS-type domain in the interval 179–277 (DLLMAALGNS…GVTPRVWRQQ (99 aa)). 2 DNA-binding regions (H-T-H motif) span residues 196–217 (QHFC…RQQT) and 244–267 (ISEI…TRET).

As to quaternary structure, binds DNA as a dimer.

Its subcellular location is the cytoplasm. Activates expression of the rhaSR operon in response to L-rhamnose. The sequence is that of HTH-type transcriptional activator RhaR from Cronobacter sakazakii (strain ATCC BAA-894) (Enterobacter sakazakii).